The primary structure comprises 170 residues: Ribosome-binding factor A (170 aa).

The disordered stretch occupies residues 123-170; sequence AKAGVYAGDEDPYVKPRVIGEDEDDDDEEGDEDGDDVDRSAPGYEPAH. The span at 143–158 shows a compositional bias: acidic residues; that stretch reads EDEDDDDEEGDEDGDD.

The protein belongs to the RbfA family. In terms of assembly, monomer. Binds 30S ribosomal subunits, but not 50S ribosomal subunits or 70S ribosomes.

Its subcellular location is the cytoplasm. In terms of biological role, one of several proteins that assist in the late maturation steps of the functional core of the 30S ribosomal subunit. Associates with free 30S ribosomal subunits (but not with 30S subunits that are part of 70S ribosomes or polysomes). Required for efficient processing of 16S rRNA. May interact with the 5'-terminal helix region of 16S rRNA. The protein is Ribosome-binding factor A of Clavibacter sepedonicus (Clavibacter michiganensis subsp. sepedonicus).